The following is a 235-amino-acid chain: Ubiquinone biosynthesis O-methyltransferase (235 aa).

4 residues coordinate S-adenosyl-L-methionine: Arg39, Gly59, Asp80, and Met124.

Belongs to the methyltransferase superfamily. UbiG/COQ3 family.

The catalysed reaction is a 3-demethylubiquinol + S-adenosyl-L-methionine = a ubiquinol + S-adenosyl-L-homocysteine + H(+). It carries out the reaction a 3-(all-trans-polyprenyl)benzene-1,2-diol + S-adenosyl-L-methionine = a 2-methoxy-6-(all-trans-polyprenyl)phenol + S-adenosyl-L-homocysteine + H(+). It functions in the pathway cofactor biosynthesis; ubiquinone biosynthesis. Functionally, O-methyltransferase that catalyzes the 2 O-methylation steps in the ubiquinone biosynthetic pathway. This chain is Ubiquinone biosynthesis O-methyltransferase, found in Vibrio campbellii (strain ATCC BAA-1116).